Here is a 691-residue protein sequence, read N- to C-terminus: Elongation factor G (691 aa).

The region spanning 8–282 (NKTRNIGIMA…AVVEFLPAPV (275 aa)) is the tr-type G domain. GTP is bound by residues 17 to 24 (AHIDAGKT), 81 to 85 (DTPGH), and 135 to 138 (NKMD).

It belongs to the TRAFAC class translation factor GTPase superfamily. Classic translation factor GTPase family. EF-G/EF-2 subfamily.

It localises to the cytoplasm. Its function is as follows. Catalyzes the GTP-dependent ribosomal translocation step during translation elongation. During this step, the ribosome changes from the pre-translocational (PRE) to the post-translocational (POST) state as the newly formed A-site-bound peptidyl-tRNA and P-site-bound deacylated tRNA move to the P and E sites, respectively. Catalyzes the coordinated movement of the two tRNA molecules, the mRNA and conformational changes in the ribosome. In Heliobacterium modesticaldum (strain ATCC 51547 / Ice1), this protein is Elongation factor G.